A 54-amino-acid polypeptide reads, in one-letter code: ATP synthase F(0) complex subunit 8 (54 aa).

The chain crosses the membrane as a helical span at residues 4 to 24 (LNPGPWFAILVFSWLIFLTII). Residues 35–54 (NEPTPVSAEKHKTESWDWPW) form a disordered region. The span at 42–54 (AEKHKTESWDWPW) shows a compositional bias: basic and acidic residues.

This sequence belongs to the ATPase protein 8 family. Component of the ATP synthase complex composed at least of ATP5F1A/subunit alpha, ATP5F1B/subunit beta, ATP5MC1/subunit c (homooctomer), MT-ATP6/subunit a, MT-ATP8/subunit 8, ATP5ME/subunit e, ATP5MF/subunit f, ATP5MG/subunit g, ATP5MK/subunit k, ATP5MJ/subunit j, ATP5F1C/subunit gamma, ATP5F1D/subunit delta, ATP5F1E/subunit epsilon, ATP5PF/subunit F6, ATP5PB/subunit b, ATP5PD/subunit d, ATP5PO/subunit OSCP. ATP synthase complex consists of a soluble F(1) head domain (subunits alpha(3) and beta(3)) - the catalytic core - and a membrane F(0) domain - the membrane proton channel (subunits c, a, 8, e, f, g, k and j). These two domains are linked by a central stalk (subunits gamma, delta, and epsilon) rotating inside the F1 region and a stationary peripheral stalk (subunits F6, b, d, and OSCP).

The protein resides in the mitochondrion membrane. Subunit 8, of the mitochondrial membrane ATP synthase complex (F(1)F(0) ATP synthase or Complex V) that produces ATP from ADP in the presence of a proton gradient across the membrane which is generated by electron transport complexes of the respiratory chain. ATP synthase complex consist of a soluble F(1) head domain - the catalytic core - and a membrane F(1) domain - the membrane proton channel. These two domains are linked by a central stalk rotating inside the F(1) region and a stationary peripheral stalk. During catalysis, ATP synthesis in the catalytic domain of F(1) is coupled via a rotary mechanism of the central stalk subunits to proton translocation. In vivo, can only synthesize ATP although its ATP hydrolase activity can be activated artificially in vitro. Part of the complex F(0) domain. The protein is ATP synthase F(0) complex subunit 8 of Cyprinus carpio (Common carp).